The sequence spans 410 residues: Cytochrome P450(MEG) (410 aa).

C355 lines the heme pocket.

The protein belongs to the cytochrome P450 family. Requires heme as cofactor.

It localises to the cytoplasm. It catalyses the reaction reduced 2[4Fe-4S]-[ferredoxin] + progesterone + O2 + 2 H(+) = 15beta-hydroxyprogesterone + oxidized 2[4Fe-4S]-[ferredoxin] + H2O. Its function is as follows. Has the capacity to hydroxylate certain steroids in the 15-beta position. Also hydroxylates progesterone in the 11-alpha and 9-beta position. This is Cytochrome P450(MEG) (cyp106A2) from Priestia megaterium (Bacillus megaterium).